A 561-amino-acid chain; its full sequence is MRLTPYPIALTTLMIALTTLPETGLGIARDALSQVGVIQSKARSLMYYSDGSSSFIVVKLLPTLPTPSGNCNLTSITAYNTTLFKLLTPLMENLDTIVSANQAGSRRKRFAGVVVGLAALGVATAAQVTAAVAVVKANANAAAINKLAASIQSTNAAISDVISSTRTLATAIQAVQDHVNGVLASGLTEANCRSQDALIGSILNLYLTELTTIFHNQIVNPALTPLSIQALRIILGSTLPLIVESRWNTNLNTAELLSSGLLTGQIISISPSYMQMVIQITVPTFVMQPGAKIIDLVTITANRMEEEVLIQVPPRILEYANEIQAYTADDCVVTPHAVFCKYNDGSPISDSLYQCLKGNLTSCVFTPVVGNYLKRFAFANGVMYVNCKALLCRCADPPMVITQDDLAGITVIDITVCREVMLDTLAFKITSLNNVTYGANFSMLAAAIKDLSPLDLSAQLAQVNKSLASAEEKIAQSSSLAAQAVSQEATITVGSVAMLIAVLALIAGCTGIMIAVQMSRRLEVLRHLTDQSIISNHHYAELNPPPYNHSYESLHPIPQSH.

Positions M1 to G26 are cleaved as a signal peptide. The Extracellular portion of the chain corresponds to I27–S495. 5 disulfides stabilise this stretch: C71-C192, C331-C340, C355-C363, C387-C392, and C394-C417. N-linked (GlcNAc...) asparagine; by host glycans are attached at residues N72 and N80. The fusion peptide stretch occupies residues F110 to V134. A coiled-coil region spans residues V135 to S163. N359 carries an N-linked (GlcNAc...) asparagine; by host glycan. N434, N440, and N464 each carry an N-linked (GlcNAc...) asparagine; by host glycan. The stretch at Q459 to A484 forms a coiled coil. The helical transmembrane segment at V496–V516 threads the bilayer. Residues Q517–H561 are Cytoplasmic-facing.

Belongs to the paramyxoviruses fusion glycoprotein family. Homotrimer of disulfide-linked F1-F2. In terms of processing, the inactive precursor F0 is glycosylated and proteolytically cleaved into F1 and F2 to be functionally active. The cleavage is mediated by cellular proteases during the transport and maturation of the polypeptide.

The protein resides in the virion membrane. It is found in the host cell membrane. Class I viral fusion protein. Under the current model, the protein has at least 3 conformational states: pre-fusion native state, pre-hairpin intermediate state, and post-fusion hairpin state. During viral and plasma cell membrane fusion, the heptad repeat (HR) regions assume a trimer-of-hairpins structure, positioning the fusion peptide in close proximity to the C-terminal region of the ectodomain. The formation of this structure appears to drive apposition and subsequent fusion of viral and plasma cell membranes. Directs fusion of viral and cellular membranes leading to delivery of the nucleocapsid into the cytoplasm. This fusion is pH independent and occurs directly at the outer cell membrane. The trimer of F1-F2 (F protein) probably interacts with HN at the virion surface. Upon HN binding to its cellular receptor, the hydrophobic fusion peptide is unmasked and interacts with the cellular membrane, inducing the fusion between cell and virion membranes. Later in infection, F proteins expressed at the plasma membrane of infected cells could mediate fusion with adjacent cells to form syncytia, a cytopathic effect that could lead to tissue necrosis. The polypeptide is Fusion glycoprotein F0 (F) (Simiiformes (SV41)).